The chain runs to 53 residues: UPF0391 membrane protein SG0393 (53 aa).

The next 2 helical transmembrane spans lie at 4–24 (WGII…GGLA) and 27–47 (AAWA…ISLF).

This sequence belongs to the UPF0391 family.

It is found in the cell membrane. This is UPF0391 membrane protein SG0393 from Sodalis glossinidius (strain morsitans).